Here is a 256-residue protein sequence, read N- to C-terminus: Coiled-coil domain-containing protein 90B, mitochondrial (256 aa).

Residues 1–42 (MRSRWIWRFLRPDGGGIRWTSTPHGRLSPALRRGFLTTTTKS) constitute a mitochondrion transit peptide. The stretch at 129 to 167 (LEKSEFANLRAENEKMKIELDQVKQQLTNETSRIRADNK) forms a coiled coil. Residues 231 to 253 (TIRYLAASVFTCLAIALGFYRFW) traverse the membrane as a helical segment.

The protein belongs to the CCDC90 family. In terms of assembly, interacts with MCU.

Its subcellular location is the mitochondrion membrane. This Mus musculus (Mouse) protein is Coiled-coil domain-containing protein 90B, mitochondrial (Ccdc90b).